The following is a 162-amino-acid chain: ATP synthase subunit b (162 aa).

The helical transmembrane segment at 6 to 25 (TLFTLVTFLVLMLAVGKVAW) threads the bilayer.

It belongs to the ATPase B chain family. In terms of assembly, F-type ATPases have 2 components, F(1) - the catalytic core - and F(0) - the membrane proton channel. F(1) has five subunits: alpha(3), beta(3), gamma(1), delta(1), epsilon(1). F(0) has three main subunits: a(1), b(2) and c(10-14). The alpha and beta chains form an alternating ring which encloses part of the gamma chain. F(1) is attached to F(0) by a central stalk formed by the gamma and epsilon chains, while a peripheral stalk is formed by the delta and b chains.

The protein localises to the cell membrane. Its function is as follows. F(1)F(0) ATP synthase produces ATP from ADP in the presence of a proton or sodium gradient. F-type ATPases consist of two structural domains, F(1) containing the extramembraneous catalytic core and F(0) containing the membrane proton channel, linked together by a central stalk and a peripheral stalk. During catalysis, ATP synthesis in the catalytic domain of F(1) is coupled via a rotary mechanism of the central stalk subunits to proton translocation. In terms of biological role, component of the F(0) channel, it forms part of the peripheral stalk, linking F(1) to F(0). The protein is ATP synthase subunit b of Lacticaseibacillus paracasei (strain ATCC 334 / BCRC 17002 / CCUG 31169 / CIP 107868 / KCTC 3260 / NRRL B-441) (Lactobacillus paracasei).